The primary structure comprises 142 residues: Large ribosomal subunit protein uL11 (142 aa).

Belongs to the universal ribosomal protein uL11 family. As to quaternary structure, part of the ribosomal stalk of the 50S ribosomal subunit. Interacts with L10 and the large rRNA to form the base of the stalk. L10 forms an elongated spine to which L12 dimers bind in a sequential fashion forming a multimeric L10(L12)X complex. Post-translationally, one or more lysine residues are methylated.

In terms of biological role, forms part of the ribosomal stalk which helps the ribosome interact with GTP-bound translation factors. The sequence is that of Large ribosomal subunit protein uL11 from Edwardsiella ictaluri (strain 93-146).